Here is a 190-residue protein sequence, read N- to C-terminus: Potassium-transporting ATPase KdpC subunit (190 aa).

A helical membrane pass occupies residues 6–26 (PAVFLVLLLTLITGLLYPLLT). The disordered stretch occupies residues 67-88 (GRPSATSDRPYNPLASSGSNLA). Residues 69-88 (PSATSDRPYNPLASSGSNLA) show a composition bias toward polar residues.

Belongs to the KdpC family. In terms of assembly, the system is composed of three essential subunits: KdpA, KdpB and KdpC.

The protein localises to the cell inner membrane. Its function is as follows. Part of the high-affinity ATP-driven potassium transport (or Kdp) system, which catalyzes the hydrolysis of ATP coupled with the electrogenic transport of potassium into the cytoplasm. This subunit acts as a catalytic chaperone that increases the ATP-binding affinity of the ATP-hydrolyzing subunit KdpB by the formation of a transient KdpB/KdpC/ATP ternary complex. This Erwinia tasmaniensis (strain DSM 17950 / CFBP 7177 / CIP 109463 / NCPPB 4357 / Et1/99) protein is Potassium-transporting ATPase KdpC subunit.